The following is a 6269-amino-acid chain: Nonribosomal peptide synthetase 1 (6269 aa).

The interval 249–781 (ENDWSRVCSF…VSGKLDRKSI (533 aa)) is adenylation 1. The region spanning 803–879 (RAANSTEDQL…ELATRVKGVT (77 aa)) is the Carrier 1 domain. Ser840 is subject to O-(pantetheine 4'-phosphoryl)serine. The segment at 894–1342 (LSPIQKLHFM…TLSDFPMLSL (449 aa)) is epimerase 1. The segment at 1373–1775 (SRMQQGILLS…FLQSLENIIH (403 aa)) is condensation 1. Residues 1725 to 2333 (HDPAEFPVYV…TGLLDRWFLR (609 aa)) form an adenylation 2 region. A disordered region spans residues 2364 to 2386 (KPSPSQLLPSSTSATHRSSGTST). Residues 2367-2376 (PSQLLPSSTS) show a composition bias toward low complexity. Positions 2377 to 2386 (ATHRSSGTST) are enriched in polar residues. The tract at residues 2597–2670 (WRKYLADVES…TGSEEVCYGY (74 aa)) is condensation 2. An adenylation 3 region spans residues 2845 to 3368 (RCAHEIIEQQ…SGKLDRKKLR (524 aa)). One can recognise a Carrier 2 domain in the interval 3392–3468 (ASDEGVEGTL…NMAKRCGMLQ (77 aa)). Ser3429 is modified (O-(pantetheine 4'-phosphoryl)serine). Positions 3512–3898 (CSPVQEGLLT…GQFSFVLEQL (387 aa)) are condensation 3. Positions 3919–4454 (DSKEVALWNK…VSGKLDRKKI (536 aa)) are adenylation 4. A Carrier 3 domain is found at 4487–4563 (EDKSTAAKIL…ELIQAAEVET (77 aa)). At Ser4524 the chain carries O-(pantetheine 4'-phosphoryl)serine. Positions 4578–5024 (LSPIQNLYFK…DFPLLPITYD (447 aa)) are epimerase 2. Residues 5052-5466 (SSVQEGILLS…PSQLVSELDL (415 aa)) are condensation 4. One can recognise a Carrier 4 domain in the interval 5552–5628 (SKLMEPEKRL…DMLAAISASN (77 aa)). Ser5589 carries the O-(pantetheine 4'-phosphoryl)serine modification. The tract at residues 5628–5658 (NSSSALEPDSPADSNNEKPAEPPRLVELERN) is disordered. The segment covering 5642–5657 (NNEKPAEPPRLVELER) has biased composition (basic and acidic residues). Residues 5720–6067 (FFFDGRGSLD…SSSDGKLGVS (348 aa)) are condensation 5. The Carrier 5 domain occupies 6139–6220 (SDILVHSDVV…GQMAVLTLHN (82 aa)).

This sequence belongs to the NRP synthetase family. In terms of processing, the thiolation domains are 4'-phosphopantetheinylated.

Its function is as follows. Nonribosomal peptide synthesis (NRPS) is a key mechanism responsible for the biosynthesis of bioactive metabolites which are potentially contributing to organismal virulence. Contributes to improved fungal tolerance against oxidative stress, during the infection process. The chain is Nonribosomal peptide synthetase 1 (NRPS1) from Aspergillus fumigatus (strain ATCC MYA-4609 / CBS 101355 / FGSC A1100 / Af293) (Neosartorya fumigata).